The chain runs to 417 residues: MLEQMGQAAKAASYQLSVLSTAEKNQLLMTIADRLEAQSAEILAANQQDLADARQNGMSAALLDRLMLDRQRLKGIADDVRQVCRLADPVGVVIDGGKLDSGLRIERRRVPLGVVGVIYEARPNVTVDVASLCLKTGNAVILRGGKETYRTNAATVRVIQDALKRHGVPAAAVQAIESPDRELVNQLLKLDRYVDMLIPRGGAGLHKLCREQSTIPVITGGIGVCHIYVDRSIEQEAALKVIVNAKKQRPSACNSVETLLIDAAIADSFLPALSARMAQEGISLHADARSLPLLQQGPACVSAVTDAQYRDEWLALDLNVKLVDDLSEGIAHIREYGTQHSDAILTRTIKHADRFVNEVDSSAVYVNASTRFTDGGQFGLGAEVAVSTQKLHARGPMGLEALTTYKWVAFGDDTVRD.

It belongs to the gamma-glutamyl phosphate reductase family.

The protein resides in the cytoplasm. It carries out the reaction L-glutamate 5-semialdehyde + phosphate + NADP(+) = L-glutamyl 5-phosphate + NADPH + H(+). It participates in amino-acid biosynthesis; L-proline biosynthesis; L-glutamate 5-semialdehyde from L-glutamate: step 2/2. In terms of biological role, catalyzes the NADPH-dependent reduction of L-glutamate 5-phosphate into L-glutamate 5-semialdehyde and phosphate. The product spontaneously undergoes cyclization to form 1-pyrroline-5-carboxylate. In Erwinia tasmaniensis (strain DSM 17950 / CFBP 7177 / CIP 109463 / NCPPB 4357 / Et1/99), this protein is Gamma-glutamyl phosphate reductase.